Reading from the N-terminus, the 191-residue chain is Scytalone dehydratase PfmaJ (191 aa).

Substrate-binding residues include Tyr25, Tyr45, and Phe48. Catalysis depends on residues His80 and His105. Asn126 contributes to the substrate binding site.

It belongs to the scytalone dehydratase family. In terms of assembly, homotrimer. Each subunit contains an active site, located in the central part of the hydrophobic core of the monomer, which functions independently.

It localises to the endosome. It catalyses the reaction scytalone = 1,3,8-trihydroxynaphthalene + H2O. The protein operates within pigment biosynthesis; melanin biosynthesis. In terms of biological role, scytalone dehydratase involved the biosynthesis of dihydroxynaphthalene (DHN)-melanin, a bluish-green pigment forming a dark layer in the conidial wall that protects the conidia from UV radiations. The first step of the pathway is the production of the pentaketide 1,3,6,8-tetrahydroxynaphthalene (1,3,6,8-THN or T4HN) by the polyketide synthase PfmaE though condensation of acetyl-CoA with malonyl-CoA. T4HN is not stable and easily oxidizes into the stable form flaviolin. T4HN is also substrate of the hydroxynaphthalene reductase PfmaG to yield scytalone. The scytalone dehydratase PfmaJ then reduces scytalone to 1,3,8-THN. 1,3,8-THN is then substrate of the hydroxynaphthalene reductase PfmaI to yield vermelone. Vermelone is further converted by the multicopper oxidase PfmaD to 1,8-DHN. Finally the laccase PFICI_06862 transforms 1,8-DHN to DHN-melanin. The roles of the 5-oxoprolinase PfmaA and the proline iminopeptidase PfmaB within the cluster have not been elucidated yet. The chain is Scytalone dehydratase PfmaJ from Pestalotiopsis fici (strain W106-1 / CGMCC3.15140).